A 222-amino-acid chain; its full sequence is MQNPRTVSDTKRAFYAAHTRPIHSIYRRFIEELLVEIHLLRVNVDFRYSPLFALGVVTAFDQFMEGYQPEGDRDRIFHALCVAEEMNPQQLKEDAASWQQYQGRPLSQILDELNSGQPSAPLNSLNHTGKYSRLHAVGLYAFLQELAGEVTIHLNETLDQLAPVIPLPIEKVKRDLELYRSNLDKINQARSLMKELVEQERKRRAQQTSAPPAVDASSDAPA.

Residues 169-208 (IEKVKRDLELYRSNLDKINQARSLMKELVEQERKRRAQQT) adopt a coiled-coil conformation. Positions 197–222 (VEQERKRRAQQTSAPPAVDASSDAPA) are disordered. The segment covering 209–222 (SAPPAVDASSDAPA) has biased composition (low complexity).

Belongs to the THF1 family.

Functionally, may be involved in photosynthetic membrane biogenesis. This is Protein Thf1 from Thermosynechococcus vestitus (strain NIES-2133 / IAM M-273 / BP-1).